We begin with the raw amino-acid sequence, 93 residues long: Alpha-defensin 1 (93 aa).

The N-terminal stretch at Met1–Ala19 is a signal peptide. The propeptide occupies Asp20–Ser58. The tract at residues Asn24 to Leu54 is disordered. 3 disulfide bridges follow: Cys64/Cys92, Cys66/Cys81, and Cys71/Cys91.

This sequence belongs to the alpha-defensin family. In terms of tissue distribution, paneth cells of the small bowel.

It localises to the secreted. In terms of biological role, probably contributes to the antimicrobial barrier function of the small bowel mucosa. Has antibacterial activity against attenuated mutants of S.typhimurium. This is Alpha-defensin 1 (Defa1) from Mus musculus (Mouse).